The following is a 333-amino-acid chain: Acetyl-coenzyme A carboxylase carboxyl transferase subunit alpha (333 aa).

A CoA carboxyltransferase C-terminal domain is found at 48–308; that stretch reads ALEVKVETLR…KEMLIEELRI (261 aa).

It belongs to the AccA family. Acetyl-CoA carboxylase is a heterohexamer composed of biotin carboxyl carrier protein (AccB), biotin carboxylase (AccC) and two subunits each of ACCase subunit alpha (AccA) and ACCase subunit beta (AccD).

It localises to the cytoplasm. It carries out the reaction N(6)-carboxybiotinyl-L-lysyl-[protein] + acetyl-CoA = N(6)-biotinyl-L-lysyl-[protein] + malonyl-CoA. It functions in the pathway lipid metabolism; malonyl-CoA biosynthesis; malonyl-CoA from acetyl-CoA: step 1/1. Component of the acetyl coenzyme A carboxylase (ACC) complex. First, biotin carboxylase catalyzes the carboxylation of biotin on its carrier protein (BCCP) and then the CO(2) group is transferred by the carboxyltransferase to acetyl-CoA to form malonyl-CoA. In Chlorobium phaeobacteroides (strain DSM 266 / SMG 266 / 2430), this protein is Acetyl-coenzyme A carboxylase carboxyl transferase subunit alpha.